The sequence spans 309 residues: HPr kinase/phosphorylase (309 aa).

Active-site residues include His-138 and Lys-159. Gly-153–Ser-160 serves as a coordination point for ATP. Ser-160 lines the Mg(2+) pocket. Asp-177 serves as the catalytic Proton acceptor; for phosphorylation activity. Proton donor; for dephosphorylation activity. The tract at residues Leu-201 to Asn-210 is important for the catalytic mechanism of both phosphorylation and dephosphorylation. Residue Glu-202 participates in Mg(2+) binding. Arg-243 is a catalytic residue. Residues Pro-264–Arg-269 form an important for the catalytic mechanism of dephosphorylation region.

This sequence belongs to the HPrK/P family. Homohexamer. It depends on Mg(2+) as a cofactor.

It catalyses the reaction [HPr protein]-L-serine + ATP = [HPr protein]-O-phospho-L-serine + ADP + H(+). The enzyme catalyses [HPr protein]-O-phospho-L-serine + phosphate + H(+) = [HPr protein]-L-serine + diphosphate. Its function is as follows. Catalyzes the ATP- as well as the pyrophosphate-dependent phosphorylation of a specific serine residue in HPr, a phosphocarrier protein of the phosphoenolpyruvate-dependent sugar phosphotransferase system (PTS). HprK/P also catalyzes the pyrophosphate-producing, inorganic phosphate-dependent dephosphorylation (phosphorolysis) of seryl-phosphorylated HPr (P-Ser-HPr). The two antagonistic activities of HprK/P are regulated by several intracellular metabolites, which change their concentration in response to the absence or presence of rapidly metabolisable carbon sources (glucose, fructose, etc.) in the growth medium. Also phosphorylates/dephosphorylates the HPr-like catabolite repression protein crh on a specific serine residue. Therefore, by controlling the phosphorylation state of HPr and crh, HPrK/P is a sensor enzyme that plays a major role in the regulation of carbon metabolism and sugar transport: it mediates carbon catabolite repression (CCR), and regulates PTS-catalyzed carbohydrate uptake and inducer exclusion. The sequence is that of HPr kinase/phosphorylase from Geobacillus thermodenitrificans (strain NG80-2).